The chain runs to 207 residues: Protein DMP1 (207 aa).

The tract at residues 1–20 is disordered; the sequence is MSETSLLIPKTNSPASSENM. Transmembrane regions (helical) follow at residues 33–53, 64–84, 121–141, and 159–179; these read LIKL…PVLT, VMSS…CFTD, IADF…VLLD, and LVMA…ALFP.

Belongs to the plant DMP1 protein family. As to expression, expressed in leaves, siliques and roots.

It localises to the endoplasmic reticulum membrane. It is found in the vacuole membrane. In terms of biological role, involved in membrane remodeling including fission during breakdown of the endoplasmic reticulum (ER) and the tonoplast during leaf senescence and in membrane fusion during vacuole biogenesis in roots. The sequence is that of Protein DMP1 from Arabidopsis thaliana (Mouse-ear cress).